The chain runs to 88 residues: Small ribosomal subunit protein bS20 (88 aa).

Belongs to the bacterial ribosomal protein bS20 family.

Its function is as follows. Binds directly to 16S ribosomal RNA. The chain is Small ribosomal subunit protein bS20 from Desulforamulus reducens (strain ATCC BAA-1160 / DSM 100696 / MI-1) (Desulfotomaculum reducens).